The sequence spans 413 residues: Multifunctional CCA protein (413 aa).

2 residues coordinate ATP: Gly-8 and Arg-11. CTP is bound by residues Gly-8 and Arg-11. Asp-21 and Asp-23 together coordinate Mg(2+). ATP is bound by residues Arg-91, Arg-143, and Arg-146. Residues Arg-91, Arg-143, and Arg-146 each contribute to the CTP site. One can recognise an HD domain in the interval 232 to 333; sequence TGVHVMMVVD…VRFFERTDAL (102 aa).

It belongs to the tRNA nucleotidyltransferase/poly(A) polymerase family. Bacterial CCA-adding enzyme type 1 subfamily. Monomer. Can also form homodimers and oligomers. Mg(2+) serves as cofactor. The cofactor is Ni(2+).

It carries out the reaction a tRNA precursor + 2 CTP + ATP = a tRNA with a 3' CCA end + 3 diphosphate. The enzyme catalyses a tRNA with a 3' CCA end + 2 CTP + ATP = a tRNA with a 3' CCACCA end + 3 diphosphate. Functionally, catalyzes the addition and repair of the essential 3'-terminal CCA sequence in tRNAs without using a nucleic acid template. Adds these three nucleotides in the order of C, C, and A to the tRNA nucleotide-73, using CTP and ATP as substrates and producing inorganic pyrophosphate. tRNA 3'-terminal CCA addition is required both for tRNA processing and repair. Also involved in tRNA surveillance by mediating tandem CCA addition to generate a CCACCA at the 3' terminus of unstable tRNAs. While stable tRNAs receive only 3'-terminal CCA, unstable tRNAs are marked with CCACCA and rapidly degraded. In Burkholderia multivorans (strain ATCC 17616 / 249), this protein is Multifunctional CCA protein.